Reading from the N-terminus, the 113-residue chain is Sensorin-A (113 aa).

The signal sequence occupies residues 1–32 (MPSRAATSPLNVQMMVVLCIVCLALQAVAANA). Phenylalanine 54 carries the phenylalanine amide modification. A propeptide spanning residues 58 to 113 (SSSETYSTNLINLLSRQLVSQEELRAILEKQPILLDEVVKILDRNDDGYITVADLL) is cleaved from the precursor. Residues 87–113 (KQPILLDEVVKILDRNDDGYITVADLL) enclose the EF-hand domain. Positions 100, 102, 104, 106, and 111 each coordinate Ca(2+).

Seems to be specific to the mechanosensory neurons of the central nervous system.

It is found in the secreted. In terms of biological role, may function as an inhibitory cotransmitter acting in conjunction with the fast excitatory transmitter released by sensory neurons. The peptide selectively inhibits certain postsynaptic cells probably by means of sensorin A release. This is Sensorin-A (PSC1) from Aplysia californica (California sea hare).